A 183-amino-acid polypeptide reads, in one-letter code: Beta-defensin 129 (183 aa).

Positions 1-19 (MKLLFPIFASLMLQYQVNT) are cleaved as a signal peptide. Disulfide bonds link Cys-27–Cys-53, Cys-34–Cys-48, and Cys-38–Cys-54. The interval 141 to 183 (TATSTKSNTKESRDSATASPPPAPPPPNILPTPSLELEEAEEQ) is disordered. Pro residues predominate over residues 159–170 (SPPPAPPPPNIL).

This sequence belongs to the beta-defensin family.

The protein localises to the secreted. Functionally, has antibacterial activity. The protein is Beta-defensin 129 (DEFB129) of Pan troglodytes (Chimpanzee).